Consider the following 90-residue polypeptide: UPF0298 protein RBAM_014860 (90 aa).

Belongs to the UPF0298 family.

It is found in the cytoplasm. The chain is UPF0298 protein RBAM_014860 from Bacillus velezensis (strain DSM 23117 / BGSC 10A6 / LMG 26770 / FZB42) (Bacillus amyloliquefaciens subsp. plantarum).